The following is a 1087-amino-acid chain: Collagen alpha-2(I) chain (1087 aa).

Residues 1 to 931 (APDPGPGPMG…PGPAGGGYDV (931 aa)) are disordered. Low complexity-rich tracts occupy residues 83 to 120 (EPGAHGAAGSPGLAGSRGRAGPAGPAGARAGPLGAAGP), 150 to 159 (EPGPNGAVGP), and 166 to 187 (PGNNGLNGAKGAAGTPGVAGAP). Residues 189–199 (FPGPRGGPGPQ) are compositionally biased toward pro residues. Residues 201-211 (PQGAAGQRGLA) are compositionally biased toward low complexity. A compositionally biased stretch (gly residues) spans 218 to 227 (GVKGDGGPKG). Low complexity-rich tracts occupy residues 228–241 (EPGNSGPQGSPGPQ), 278–321 (AAGP…AGPS), 335–345 (PRGQPGNLGFP), 360–384 (KGATGPTGLRGPPGPDGNNGATGAT), and 396–408 (QGAAGAPGFQGLP). Positions 409-418 (GPAGGAGEAG) are enriched in gly residues. The segment covering 443-453 (NPGAAGASGPQ) has biased composition (low complexity). The segment covering 466-493 (GTDGGKGEPGAAGAAGGPGHQGPGGMPG) has biased composition (gly residues). Residues 504–515 (KGEKGEAGHRGP) are compositionally biased toward basic and acidic residues. Composition is skewed to low complexity over residues 560–602 (PAGA…TGAR), 613–640 (FPGAAGRVGAAGPAGLVGPPGSAGPAGK), and 677–695 (PGPAGSPGTPGTSGPLGLQ). Residues 708–717 (GSPGGAGAVG) are compositionally biased toward gly residues. 2 stretches are compositionally biased toward low complexity: residues 718–740 (EPGRVGPAGPAGARGAPGNLGLP) and 776–788 (PGSSGAMGLAGAP). Gly residues predominate over residues 792–812 (GPSGGAGRGNRGESGPGGAAG). Over residues 813 to 828 (AVGPAGARGAAGPSGP) the composition is skewed to low complexity. Over residues 829-843 (RGEKGVAGEKGERGL) the composition is skewed to basic and acidic residues. Low complexity-rich tracts occupy residues 849–868 (LQGMPGPSGPSGDTGSAGPN) and 897–909 (APGARGPPGYVGP). Pro residues predominate over residues 910–924 (AGPPGSPGLPGPPGP). The Fibrillar collagen NC1 domain occupies 929–1087 (YDVSGYDEYR…GLDLGPVCFK (159 aa)).

The protein belongs to the fibrillar collagen family.

It localises to the secreted. It is found in the extracellular space. Its subcellular location is the extracellular matrix. In Epinephelus costae (Goldblotch grouper), this protein is Collagen alpha-2(I) chain.